A 661-amino-acid polypeptide reads, in one-letter code: UvrABC system protein B (661 aa).

Residues Ala25–Pro414 form the Helicase ATP-binding domain. Gly38–Thr45 serves as a coordination point for ATP. Positions Tyr91–Ile114 match the Beta-hairpin motif. One can recognise a Helicase C-terminal domain in the interval Gln430–Ile592. In terms of domain architecture, UVR spans Lys621–Ala656.

Belongs to the UvrB family. Forms a heterotetramer with UvrA during the search for lesions. Interacts with UvrC in an incision complex.

The protein resides in the cytoplasm. Its function is as follows. The UvrABC repair system catalyzes the recognition and processing of DNA lesions. A damage recognition complex composed of 2 UvrA and 2 UvrB subunits scans DNA for abnormalities. Upon binding of the UvrA(2)B(2) complex to a putative damaged site, the DNA wraps around one UvrB monomer. DNA wrap is dependent on ATP binding by UvrB and probably causes local melting of the DNA helix, facilitating insertion of UvrB beta-hairpin between the DNA strands. Then UvrB probes one DNA strand for the presence of a lesion. If a lesion is found the UvrA subunits dissociate and the UvrB-DNA preincision complex is formed. This complex is subsequently bound by UvrC and the second UvrB is released. If no lesion is found, the DNA wraps around the other UvrB subunit that will check the other stand for damage. The chain is UvrABC system protein B from Rickettsia conorii (strain ATCC VR-613 / Malish 7).